An 801-amino-acid polypeptide reads, in one-letter code: Putative mRNA-capping enzyme P5 (801 aa).

This sequence belongs to the phytoreovirus protein P5 family.

The protein localises to the virion. Its subcellular location is the host cytoplasm. It catalyses the reaction a 5'-end diphospho-ribonucleoside in mRNA + GTP + H(+) = a 5'-end (5'-triphosphoguanosine)-ribonucleoside in mRNA + diphosphate. Its pathway is mRNA processing; mRNA capping. Enzyme involved in mRNA capping (Potential). Binds to GTP and might have guanylyltransferase activity. Together with the RNA-directed RNA polymerase P1 and protein P7, forms an transcriptional complex positioned near the channels situated at each of the five-fold vertices of the core. The polypeptide is Putative mRNA-capping enzyme P5 (Alopecurus aequalis (Barnyard grass)).